A 352-amino-acid chain; its full sequence is Histidine biosynthesis bifunctional protein HisB (352 aa).

Positions 1–164 are histidinol-phosphatase; it reads MSQKILFIDR…EIENEILSSF (164 aa). Catalysis depends on Asp-9, which acts as the Nucleophile. The Mg(2+) site is built by Asp-9 and Asp-11. The Proton donor role is filled by Asp-11. Positions 93, 95, 101, and 103 each coordinate Zn(2+). Mg(2+) is bound at residue Asp-130. An imidazoleglycerol-phosphate dehydratase region spans residues 165-352; the sequence is RSASYQRTTK…ENLASSKGVI (188 aa).

It in the N-terminal section; belongs to the histidinol-phosphatase family. In the C-terminal section; belongs to the imidazoleglycerol-phosphate dehydratase family. Mg(2+) is required as a cofactor. Zn(2+) serves as cofactor.

Its subcellular location is the cytoplasm. It catalyses the reaction D-erythro-1-(imidazol-4-yl)glycerol 3-phosphate = 3-(imidazol-4-yl)-2-oxopropyl phosphate + H2O. The enzyme catalyses L-histidinol phosphate + H2O = L-histidinol + phosphate. Its pathway is amino-acid biosynthesis; L-histidine biosynthesis; L-histidine from 5-phospho-alpha-D-ribose 1-diphosphate: step 6/9. It participates in amino-acid biosynthesis; L-histidine biosynthesis; L-histidine from 5-phospho-alpha-D-ribose 1-diphosphate: step 8/9. The sequence is that of Histidine biosynthesis bifunctional protein HisB from Campylobacter jejuni subsp. jejuni serotype O:6 (strain 81116 / NCTC 11828).